We begin with the raw amino-acid sequence, 454 residues long: Phosphoglucosamine mutase (454 aa).

Serine 104 serves as the catalytic Phosphoserine intermediate. Serine 104, aspartate 247, aspartate 249, and aspartate 251 together coordinate Mg(2+). Serine 104 carries the phosphoserine modification.

Belongs to the phosphohexose mutase family. Requires Mg(2+) as cofactor. Post-translationally, activated by phosphorylation.

The enzyme catalyses alpha-D-glucosamine 1-phosphate = D-glucosamine 6-phosphate. Its function is as follows. Catalyzes the conversion of glucosamine-6-phosphate to glucosamine-1-phosphate. This chain is Phosphoglucosamine mutase, found in Bifidobacterium animalis subsp. lactis (strain AD011).